A 66-amino-acid polypeptide reads, in one-letter code: Large ribosomal subunit protein uL29 (66 aa).

The protein belongs to the universal ribosomal protein uL29 family.

In Borrelia recurrentis (strain A1), this protein is Large ribosomal subunit protein uL29.